The primary structure comprises 257 residues: Ditrans,polycis-undecaprenyl-diphosphate synthase ((2E,6E)-farnesyl-diphosphate specific) (257 aa).

The active site involves Asp-34. Position 34 (Asp-34) interacts with Mg(2+). Substrate is bound by residues Gly-35–Arg-38, Trp-39, Arg-47, and His-51. Asn-82 functions as the Proton acceptor in the catalytic mechanism. Residues Trp-83, Arg-85, Arg-201, and Arg-207 to Ser-209 each bind substrate. Residue Glu-220 coordinates Mg(2+).

This sequence belongs to the UPP synthase family. Homodimer. Mg(2+) is required as a cofactor.

It carries out the reaction 8 isopentenyl diphosphate + (2E,6E)-farnesyl diphosphate = di-trans,octa-cis-undecaprenyl diphosphate + 8 diphosphate. Its function is as follows. Catalyzes the sequential condensation of isopentenyl diphosphate (IPP) with (2E,6E)-farnesyl diphosphate (E,E-FPP) to yield (2Z,6Z,10Z,14Z,18Z,22Z,26Z,30Z,34E,38E)-undecaprenyl diphosphate (di-trans,octa-cis-UPP). UPP is the precursor of glycosyl carrier lipid in the biosynthesis of bacterial cell wall polysaccharide components such as peptidoglycan and lipopolysaccharide. This Francisella tularensis subsp. tularensis (strain SCHU S4 / Schu 4) protein is Ditrans,polycis-undecaprenyl-diphosphate synthase ((2E,6E)-farnesyl-diphosphate specific).